The sequence spans 199 residues: N-(5'-phosphoribosyl)anthranilate isomerase (199 aa).

The protein belongs to the TrpF family.

The enzyme catalyses N-(5-phospho-beta-D-ribosyl)anthranilate = 1-(2-carboxyphenylamino)-1-deoxy-D-ribulose 5-phosphate. The protein operates within amino-acid biosynthesis; L-tryptophan biosynthesis; L-tryptophan from chorismate: step 3/5. In Lacticaseibacillus paracasei (strain ATCC 334 / BCRC 17002 / CCUG 31169 / CIP 107868 / KCTC 3260 / NRRL B-441) (Lactobacillus paracasei), this protein is N-(5'-phosphoribosyl)anthranilate isomerase.